The chain runs to 431 residues: Enolase (431 aa).

Glutamine 166 is a (2R)-2-phosphoglycerate binding site. Glutamate 208 functions as the Proton donor in the catalytic mechanism. Positions 245, 288, and 315 each coordinate Mg(2+). Lysine 340, arginine 369, serine 370, and lysine 391 together coordinate (2R)-2-phosphoglycerate. Lysine 340 (proton acceptor) is an active-site residue.

The protein belongs to the enolase family. The cofactor is Mg(2+).

It is found in the cytoplasm. It localises to the secreted. The protein localises to the cell surface. The enzyme catalyses (2R)-2-phosphoglycerate = phosphoenolpyruvate + H2O. It participates in carbohydrate degradation; glycolysis; pyruvate from D-glyceraldehyde 3-phosphate: step 4/5. Its function is as follows. Catalyzes the reversible conversion of 2-phosphoglycerate (2-PG) into phosphoenolpyruvate (PEP). It is essential for the degradation of carbohydrates via glycolysis. The sequence is that of Enolase from Clostridium perfringens (strain 13 / Type A).